The sequence spans 238 residues: Mitochondrial inner membrane protease ATP23 (238 aa).

A divalent metal cation is bound at residue His-138. Glu-139 is a catalytic residue. His-142 contacts a divalent metal cation.

This sequence belongs to the peptidase M76 family.

It is found in the mitochondrion inner membrane. Its function is as follows. Has a dual role in the assembly of mitochondrial ATPase. Acts as a protease that removes N-terminal residues of mitochondrial ATPase CF(0) subunit 6 at the intermembrane space side. Also involved in the correct assembly of the membrane-embedded ATPase CF(0) particle, probably mediating association of subunit 6 with the subunit 9 ring. In Candida albicans (strain SC5314 / ATCC MYA-2876) (Yeast), this protein is Mitochondrial inner membrane protease ATP23 (ATP23).